Here is a 402-residue protein sequence, read N- to C-terminus: L-threonine ammonia-lyase (402 aa).

Lysine 51 bears the N6-(pyridoxal phosphate)lysine mark. Residues asparagine 78, 178–181 (GGGL), and serine 302 contribute to the pyridoxal 5'-phosphate site. An ACT domain is found at 327–402 (KLKVELDDLP…GVGYLVDVLK (76 aa)).

Belongs to the serine/threonine dehydratase family. Requires pyridoxal 5'-phosphate as cofactor.

It carries out the reaction L-threonine = 2-oxobutanoate + NH4(+). It catalyses the reaction L-serine = pyruvate + NH4(+). It participates in amino-acid biosynthesis; L-isoleucine biosynthesis; 2-oxobutanoate from L-threonine: step 1/1. Its function is as follows. Catalyzes the conversion of threonine to 2-oxobutanoate and ammonia. Functions in the threonine-dependent pathway of isoleucine biosynthesis, which is the minor pathway for isoleucine biosynthesis in G.sulfurreducens. Also displays serine ammonia-lyase activity, yielding pyruvate from L-serine. The sequence is that of L-threonine ammonia-lyase from Geobacter sulfurreducens (strain ATCC 51573 / DSM 12127 / PCA).